A 186-amino-acid polypeptide reads, in one-letter code: Ribosome-recycling factor (186 aa).

This sequence belongs to the RRF family.

It is found in the cytoplasm. In terms of biological role, responsible for the release of ribosomes from messenger RNA at the termination of protein biosynthesis. May increase the efficiency of translation by recycling ribosomes from one round of translation to another. This chain is Ribosome-recycling factor, found in Rickettsia canadensis (strain McKiel).